The chain runs to 366 residues: Aminomethyltransferase (366 aa).

The protein belongs to the GcvT family. The glycine cleavage system is composed of four proteins: P, T, L and H.

The enzyme catalyses N(6)-[(R)-S(8)-aminomethyldihydrolipoyl]-L-lysyl-[protein] + (6S)-5,6,7,8-tetrahydrofolate = N(6)-[(R)-dihydrolipoyl]-L-lysyl-[protein] + (6R)-5,10-methylene-5,6,7,8-tetrahydrofolate + NH4(+). Functionally, the glycine cleavage system catalyzes the degradation of glycine. This chain is Aminomethyltransferase, found in Thermosynechococcus vestitus (strain NIES-2133 / IAM M-273 / BP-1).